Reading from the N-terminus, the 198-residue chain is V-type ATP synthase subunit E (198 aa).

Belongs to the V-ATPase E subunit family.

Functionally, produces ATP from ADP in the presence of a proton gradient across the membrane. The chain is V-type ATP synthase subunit E from Acetivibrio thermocellus (strain ATCC 27405 / DSM 1237 / JCM 9322 / NBRC 103400 / NCIMB 10682 / NRRL B-4536 / VPI 7372) (Clostridium thermocellum).